A 184-amino-acid polypeptide reads, in one-letter code: NADH-quinone oxidoreductase subunit B (184 aa).

4 residues coordinate [4Fe-4S] cluster: Cys37, Cys38, Cys103, and Cys132.

The protein belongs to the complex I 20 kDa subunit family. In terms of assembly, NDH-1 is composed of 14 different subunits. Subunits NuoB, C, D, E, F, and G constitute the peripheral sector of the complex. The cofactor is [4Fe-4S] cluster.

It is found in the cell membrane. The catalysed reaction is a quinone + NADH + 5 H(+)(in) = a quinol + NAD(+) + 4 H(+)(out). In terms of biological role, NDH-1 shuttles electrons from NADH, via FMN and iron-sulfur (Fe-S) centers, to quinones in the respiratory chain. The immediate electron acceptor for the enzyme in this species is believed to be a menaquinone. Couples the redox reaction to proton translocation (for every two electrons transferred, four hydrogen ions are translocated across the cytoplasmic membrane), and thus conserves the redox energy in a proton gradient. In Mycolicibacterium paratuberculosis (strain ATCC BAA-968 / K-10) (Mycobacterium paratuberculosis), this protein is NADH-quinone oxidoreductase subunit B.